Reading from the N-terminus, the 189-residue chain is Peptidyl-tRNA hydrolase (189 aa).

Y15 lines the tRNA pocket. Residue H20 is the Proton acceptor of the active site. Positions 66, 68, and 114 each coordinate tRNA.

Belongs to the PTH family. Monomer.

The protein resides in the cytoplasm. The enzyme catalyses an N-acyl-L-alpha-aminoacyl-tRNA + H2O = an N-acyl-L-amino acid + a tRNA + H(+). Hydrolyzes ribosome-free peptidyl-tRNAs (with 1 or more amino acids incorporated), which drop off the ribosome during protein synthesis, or as a result of ribosome stalling. Functionally, catalyzes the release of premature peptidyl moieties from peptidyl-tRNA molecules trapped in stalled 50S ribosomal subunits, and thus maintains levels of free tRNAs and 50S ribosomes. The chain is Peptidyl-tRNA hydrolase from Streptococcus pyogenes serotype M1.